The sequence spans 228 residues: Non-fluorescent flavoprotein (228 aa).

Belongs to the bacterial luciferase oxidoreductase family. As to quaternary structure, homodimer. Requires FMN as cofactor.

This Photobacterium leiognathi protein is Non-fluorescent flavoprotein (luxF).